The primary structure comprises 280 residues: uncharacterized protein (280 aa).

The HTH rpiR-type domain maps to 1-78; it reads MDVIQRIKEK…VLLAQSISRA (78 aa). A DNA-binding region (H-T-H motif) is located at residues 37 to 57; that stretch reads ISDLSEKAGVKSEASVVKFYK. The 141-residue stretch at 123–263 folds into the SIS domain; it reads TVDLFKNAQR…YTLLAARDPR (141 aa).

This is an uncharacterized protein from Thermotoga maritima (strain ATCC 43589 / DSM 3109 / JCM 10099 / NBRC 100826 / MSB8).